A 491-amino-acid chain; its full sequence is uncharacterized protein (491 aa).

The region spanning 1 to 92 (MSFVIASPEA…GGGSYASAEI (92 aa)) is the PE domain. Disordered stretches follow at residues 114–156 (PLVG…AGGA), 376–400 (AGGS…GNPG), and 419–491 (AGQG…GPDG). The span at 128–145 (GQPGGDGGILWGNGGNGG) shows a compositional bias: gly residues. Residues 432–480 (GGPGGVGGHGGTAILFGDGGAGGAGAAGGPGTPDGAAGPGGSGGTGGLL) are compositionally biased toward gly residues.

It belongs to the mycobacterial PE family. PGRS subfamily.

This is an uncharacterized protein from Mycobacterium bovis (strain ATCC BAA-935 / AF2122/97).